The primary structure comprises 345 residues: MAKRARLRLILLAKLVSLKMSDEKEKRSLRPVAFVAVVFSTVAITSCLITFPLILHYIQTLESQVQLDLEFCQARARDMWKEMLDIETGGKKDSAKLANIVLNHRRLEKRDTLQDFWARRLHDQELRDQPVGYDNPSVGVESFNSEGGGCCTCHRGPPGPAGDGGRDGADGVDGTPGEIGPPGPPAPPGPDPHSLFPPQCPCEAPPGDGGPPGQPGPDGPPGAPGNAGEDGKPGDQGPRGPPGIPGAPGQPGRPGPPGEPGTYKTEVGPAGRAGAPGRPGPPGQPGPAGPPGENGKGGGQGPSGLPGPPGQPGQNGAPGEVGQPGDNGAPGSCDHCPPARLAPGY.

Triple-helical region stretches follow at residues 156 to 185 (GPPG…PGPP), 207 to 263 (GDGG…PGTY), and 268 to 333 (GPAG…PGSC). A disordered region spans residues 161 to 345 (AGDGGRDGAD…CPPARLAPGY (185 aa)). Composition is skewed to pro residues over residues 179–191 (IGPP…PGPD), 198–223 (PQCP…PPGA), and 278–290 (RPGP…PAGP). Gly residues predominate over residues 292 to 304 (GENGKGGGQGPSG).

This sequence belongs to the cuticular collagen family. Collagen polypeptide chains are complexed within the cuticle by disulfide bonds and other types of covalent cross-links.

In terms of biological role, nematode cuticles are composed largely of collagen-like proteins. The cuticle functions both as an exoskeleton and as a barrier to protect the worm from its environment. In Caenorhabditis elegans, this protein is Cuticle collagen 14 (col-14).